Here is a 106-residue protein sequence, read N- to C-terminus: Pyruvate decarboxylase 2 (106 aa).

Mg(2+) contacts are provided by asparagine 10 and glycine 12.

It belongs to the TPP enzyme family. As to quaternary structure, homotetramer. It depends on a metal cation as a cofactor. Requires thiamine diphosphate as cofactor.

The catalysed reaction is a 2-oxocarboxylate + H(+) = an aldehyde + CO2. The sequence is that of Pyruvate decarboxylase 2 (PDC2) from Zea mays (Maize).